Consider the following 169-residue polypeptide: Podoplanin (169 aa).

An N-terminal signal peptide occupies residues 1–22 (MWRVPVLLLVLGGAGLRVPAAG). The Extracellular segment spans residues 23-138 (ASTVRPDDII…EKDGLATVTL (116 aa)). Thr25 carries an O-linked (GalNAc...) threonine glycan. The tract at residues 37–69 (DSVVTPGTEDSVVTPGAEDNVVTDGATEEPYES) is disordered. Ser38 is a glycosylation site (O-linked (GalNAc...) serine). 2 O-linked (GalNAc...) threonine glycosylation sites follow: Thr41 and Thr44. Residue Ser47 is glycosylated (O-linked (GalNAc...) serine). O-linked (GalNAc...) threonine glycosylation is found at Thr50, Thr59, Thr63, Thr72, Thr76, Thr79, Thr83, Thr92, Thr96, Thr106, Thr107, Thr108, Thr113, Thr126, and Thr127. A helical membrane pass occupies residues 139-159 (VGIIVGVLLAIGFIGGIIIVV). A requires for dimerization and lipid rafts association region spans residues 140-144 (GIIVG). Topologically, residues 160–169 (ARKMSGRYSP) are cytoplasmic. The requires for interaction with MSN and EZR stretch occupies residues 161–162 (RK).

It belongs to the podoplanin family. In terms of assembly, homodimer. Interacts with CLEC1B; the interaction is independent of CLEC1B glycosylation and activates CLEC1B; the interaction is dependent of sialic acid on O-glycans. Interacts with CD9; this interaction is homophilic and attenuates platelet aggregation and pulmonary metastasis induced by PDPN. Interacts with LGALS8; the interaction is glycosylation-dependent; may participate in connection of the lymphatic endothelium to the surrounding extracellular matrix. Interacts with HSPA9. Interacts (via extracellular domain) with CD44; this interaction is required for PDPN-mediated directional migration and regulation of lamellipodia extension/stabilization during cell spreading and migration. Interacts (via cytoplasmic domain) with MSN and EZR; activates RHOA and promotes epithelial-mesenchymal transition. Interacts with CCL21; relocalized PDPN to the basolateral membrane. Extensively O-glycosylated. Contains sialic acid residues. O-glycosylation is necessary for platelet aggregation activity. Disialylated at Thr-59; sialic acid is critical for platelet-aggregating activity and for CLEC1B interaction. In terms of processing, the N-terminus is blocked.

It is found in the membrane. The protein localises to the cell projection. The protein resides in the filopodium membrane. Its subcellular location is the lamellipodium membrane. It localises to the microvillus membrane. It is found in the ruffle membrane. The protein localises to the membrane raft. The protein resides in the apical cell membrane. Its subcellular location is the basolateral cell membrane. It localises to the invadopodium. Functionally, mediates effects on cell migration and adhesion through its different partners. During development plays a role in blood and lymphatic vessels separation by binding CLEC1B, triggering CLEC1B activation in platelets and leading to platelet activation and/or aggregation. Interaction with CD9, on the contrary, attenuates platelet aggregation and pulmonary metastasis induced by PDPN. Mediates effects on cell migration and adhesion through its different partners. Through MSN or EZR interaction promotes epithelial-mesenchymal transition (EMT) leading to ERZ phosphorylation and triggering RHOA activation leading to cell migration increase and invasiveness. Interaction with CD44 promotes directional cell migration in epithelial and tumor cells. In lymph nodes (LNs), controls fibroblastic reticular cells (FRCs) adhesion to the extracellular matrix (ECM) and contraction of the actomyosin by maintaining ERM proteins (EZR; MSN and RDX) and MYL9 activation through association with unknown transmembrane proteins. Engagement of CLEC1B by PDPN promotes FRCs relaxation by blocking lateral membrane interactions leading to reduction of ERM proteins (EZR; MSN and RDX) and MYL9 activation. Through binding with LGALS8 may participate in connection of the lymphatic endothelium to the surrounding extracellular matrix. In keratinocytes, induces changes in cell morphology showing an elongated shape, numerous membrane protrusions, major reorganization of the actin cytoskeleton, increased motility and decreased cell adhesion. Controls invadopodia stability and maturation leading to efficient degradation of the extracellular matrix (ECM) in tumor cells through modulation of RHOC activity in order to activate ROCK1/ROCK2 and LIMK1/LIMK2 and inactivation of CFL1. Required for normal lung cell proliferation and alveolus formation at birth. Does not function as a water channel or as a regulator of aquaporin-type water channels. Does not have any effect on folic acid or amino acid transport. The chain is Podoplanin (PDPN) from Canis lupus familiaris (Dog).